A 29-amino-acid polypeptide reads, in one-letter code: HEPCGESCVFIPCITTVVGCSCKNKVCYD.

A cross-link (cyclopeptide (His-Asp)) is located at residues 1-29 (HEPCGESCVFIPCITTVVGCSCKNKVCYD). 3 disulfide bridges follow: Cys-4-Cys-20, Cys-8-Cys-22, and Cys-13-Cys-27.

Post-translationally, contains 3 disulfide bonds. This is a cyclic peptide.

Its function is as follows. Probably participates in a plant defense mechanism. The chain is Cyclotide cter-L from Clitoria ternatea (Butterfly pea).